Consider the following 408-residue polypeptide: Exo-alpha-sialidase ARB_03431 (408 aa).

The N-terminal stretch at 1-22 (MGIKQWLLSLVVVAISATATQA) is a signal peptide. 4 residues coordinate substrate: Arg62, Arg81, Asp87, and Gln150. Residue Asn237 is glycosylated (N-linked (GlcNAc...) asparagine). Residues Arg267, Arg324, 324 to 325 (RT), 333 to 334 (YD), Lys339, Tyr360, Asp378, and 378 to 380 (DWY) contribute to the substrate site. Asn398 carries an N-linked (GlcNAc...) asparagine glycan.

It belongs to the glycosyl hydrolase 33 family.

The protein localises to the secreted. It catalyses the reaction Hydrolysis of alpha-(2-&gt;3)-, alpha-(2-&gt;6)-, alpha-(2-&gt;8)- glycosidic linkages of terminal sialic acid residues in oligosaccharides, glycoproteins, glycolipids, colominic acid and synthetic substrates.. Its function is as follows. Sialidase is able to release sialic acid from a wide variety of natural substrates. This chain is Exo-alpha-sialidase ARB_03431, found in Arthroderma benhamiae (strain ATCC MYA-4681 / CBS 112371) (Trichophyton mentagrophytes).